Consider the following 208-residue polypeptide: Protein-L-isoaspartate O-methyltransferase (208 aa).

Residue Ser-59 is part of the active site.

Belongs to the methyltransferase superfamily. L-isoaspartyl/D-aspartyl protein methyltransferase family.

The protein resides in the cytoplasm. It catalyses the reaction [protein]-L-isoaspartate + S-adenosyl-L-methionine = [protein]-L-isoaspartate alpha-methyl ester + S-adenosyl-L-homocysteine. Functionally, catalyzes the methyl esterification of L-isoaspartyl residues in peptides and proteins that result from spontaneous decomposition of normal L-aspartyl and L-asparaginyl residues. It plays a role in the repair and/or degradation of damaged proteins. The protein is Protein-L-isoaspartate O-methyltransferase of Erwinia tasmaniensis (strain DSM 17950 / CFBP 7177 / CIP 109463 / NCPPB 4357 / Et1/99).